Consider the following 191-residue polypeptide: MSEEKQTAEQVEAAEQEEVTEQAEQAASQEQHEETAGQEEALQHQIDELQGLLDEKENKLLRVQADFENYKRRSRLEMEAAQKYRSQNVVTEILPALDNFERALQVEAESEQTKSLLQGMEMVRRQLMDALEKEGVEAIEAVGQEFDPNLHQAVMQVEDENFGSNIVIEELQKGYKLKDRVIRPSMVKVNQ.

The disordered stretch occupies residues 1-49 (MSEEKQTAEQVEAAEQEEVTEQAEQAASQEQHEETAGQEEALQHQIDEL). The span at 12 to 21 (EAAEQEEVTE) shows a compositional bias: acidic residues. A compositionally biased stretch (basic and acidic residues) spans 30 to 49 (EQHEETAGQEEALQHQIDEL).

It belongs to the GrpE family. Homodimer.

It is found in the cytoplasm. In terms of biological role, participates actively in the response to hyperosmotic and heat shock by preventing the aggregation of stress-denatured proteins, in association with DnaK and GrpE. It is the nucleotide exchange factor for DnaK and may function as a thermosensor. Unfolded proteins bind initially to DnaJ; upon interaction with the DnaJ-bound protein, DnaK hydrolyzes its bound ATP, resulting in the formation of a stable complex. GrpE releases ADP from DnaK; ATP binding to DnaK triggers the release of the substrate protein, thus completing the reaction cycle. Several rounds of ATP-dependent interactions between DnaJ, DnaK and GrpE are required for fully efficient folding. The protein is Protein GrpE of Bacillus velezensis (strain DSM 23117 / BGSC 10A6 / LMG 26770 / FZB42) (Bacillus amyloliquefaciens subsp. plantarum).